A 527-amino-acid polypeptide reads, in one-letter code: Benzoate--CoA ligase (527 aa).

This sequence belongs to the ATP-dependent AMP-binding enzyme family. Benzoate-CoA ligase subfamily. As to quaternary structure, monomer.

It catalyses the reaction benzoate + ATP + CoA = benzoyl-CoA + AMP + diphosphate. Its function is as follows. Catalyzes the ligation of benzoate and CoA to form benzoyl-CoA at the expense of ATP. The enzyme also ligates 2-aminobenzoate and CoA. The enzyme shows activity toward a number of benzoate derivatives. The sequence is that of Benzoate--CoA ligase (bclA) from Thauera aromatica.